The primary structure comprises 411 residues: Lissencephaly-1 homolog (411 aa).

Residues 9-41 form the LisH domain; the sequence is QREELNQAIADYLGSNGYADSLETFRKEADLST. The stretch at 56–83 forms a coiled coil; that stretch reads TSVIRLQKKVMELEAKLTEAEKEVIEGA. WD repeat units follow at residues 106–147, 148–187, 191–230, 233–272, 275–334, 337–376, and 379–411; these read GHRA…RSLK, GHTD…ECIK, GHDH…CVKT, GHRE…CKVE, DHEH…CLLT, GHDN…CMKT, and AHQH…WECR.

It belongs to the WD repeat LIS1/nudF family.

The protein localises to the cytoplasm. It is found in the cytoskeleton. Its subcellular location is the microtubule organizing center. It localises to the centrosome. Its function is as follows. Positively regulates the activity of the minus-end directed microtubule motor protein dynein. May enhance dynein-mediated microtubule sliding by targeting dynein to the microtubule plus end. Required for several dynein- and microtubule-dependent processes. This Drosophila sechellia (Fruit fly) protein is Lissencephaly-1 homolog.